The primary structure comprises 738 residues: Zinc finger protein 235 (738 aa).

Positions 8–79 constitute a KRAB domain; the sequence is VTFKDVAVAF…ELQTQRGKHS (72 aa). Residues 263–285 form a C2H2-type 1; degenerate zinc finger; sequence YQGNECEEAFNDSSSLELHKQVH. 15 consecutive C2H2-type zinc fingers follow at residues 319–341, 347–369, 375–397, 403–425, 431–453, 459–481, 487–509, 515–537, 543–565, 571–593, 599–621, 627–649, 655–677, 683–705, and 711–733; these read YWCHECGKGFSQSSNLQTHQRVH, YTCHECGKSFNQSSHLYAHLPIH, YRCDSCGKGFSRSTDLNIHCRVH, YKCEVCGKGFTQRSHLQAHERIH, YKCGDCGKRFSCSSNLHTHQRVH, YKCDECGKCFSLSFNLHSHQRVH, YKCEECGKGFSSASSFQSHQRVH, FRCNVCGKGFSQSSYFQAHQRVH, YKCEVCGKRFNWSLNLHNHQRVH, YKCEECGKGFSQASNLQAHQSVH, FKCDACQKRFSQASHLQAHQRVH, YKCDTCGKAFSQRSNLQVHQIIH, FKCEECGKEFSWSAGLSAHQRVH, YTCQQCGKGFSQASHFHTHQRVH, and YICDVCCKGFSQRSHLIYHQRVH.

The protein belongs to the krueppel C2H2-type zinc-finger protein family.

It localises to the nucleus. May be involved in transcriptional regulation. This chain is Zinc finger protein 235 (ZNF235), found in Homo sapiens (Human).